Consider the following 317-residue polypeptide: Insulin-like growth factor-binding protein 2 (317 aa).

The N-terminal stretch at 1–33 (MQPRLGGPALLLLPPLLLLLLLGAGGGDCGARA) is a signal peptide. In terms of domain architecture, IGFBP N-terminal spans 35 to 126 (VLFRCPPCTP…VHGEGTCEKH (92 aa)). 6 disulfide bridges follow: Cys39-Cys76, Cys42-Cys78, Cys50-Cys79, Cys68-Cys82, Cys90-Cys103, and Cys97-Cys123. Disordered regions lie at residues 125 to 151 (KHGDAEYSASPEQVADNGEEHSEGGQV) and 189 to 218 (EQHRQMGKGGKHHLGLEEPKKLRPPPARTP). Residues 216–298 (RTPCQQELDQ…APTIRGDPEC (83 aa)) form the Thyroglobulin type-1 domain. Disulfide bonds link Cys219–Cys253, Cys264–Cys275, and Cys277–Cys298. Residues 293 to 295 (RGD) carry the Cell attachment site motif.

Interacts with IGF1. Interacts with IGF2. Interacts (via RGD motif) with integrin alpha5/ITGA5; this interaction induces cell migration, adhesion or apoptosis according to the context. Interacts with PTPRB; this interaction leads to PTPRB dimerization and inactivation. In terms of processing, cleaved by MMP9 leading to release of free IGF2 from IGFBP2-IGF2 complex, which contributes to enhance the motility and the growth of astrocytes. O-glycosylated. As to expression, expressed in abundance in selected adult tissues, namely liver, kidney, adrenal, pituitary and choroid plexus.

Its subcellular location is the secreted. In terms of biological role, multifunctional protein that plays a critical role in regulating the availability of IGFs such as IGF1 and IGF2 to their receptors and thereby regulates IGF-mediated cellular processes including proliferation, differentiation, and apoptosis in a cell-type specific manner. Functions coordinately with receptor protein tyrosine phosphatase beta/PTPRB and the IGF1 receptor to regulate IGF1-mediated signaling by stimulating the phosphorylation of PTEN leading to its inactivation and AKT1 activation. Plays a positive role in cell migration via interaction with integrin alpha5/ITGA5 through an RGD motif. Additionally, interaction with ITGA5/ITGB1 enhances the adhesion of endothelial progenitor cells to endothelial cells. Upon mitochondrial damage, facilitates apoptosis with ITGA5 of podocytes, and then activates the phosphorylation of focal adhesion kinase (FAK)-mediated mitochondrial injury. This chain is Insulin-like growth factor-binding protein 2 (IGFBP2), found in Ovis aries (Sheep).